The following is a 290-amino-acid chain: UPF0761 membrane protein YihY (290 aa).

Transmembrane regions (helical) follow at residues 44–64 (LLSLVPLVAVVFALFAAFPMF), 104–124 (VGACGLIVTALLLMYSIDSAL), 140–160 (FAVYWMILTLGPLLAGASLAI), 183–203 (IFPLLLSWISFWLLYSIVPTI), 210–230 (AIVGAFVAALLFEAGKKGFAL), and 244–264 (VLAVIPILFVWVYWTWCIVLL).

Belongs to the UPF0761 family.

Its subcellular location is the cell inner membrane. The protein is UPF0761 membrane protein YihY of Escherichia fergusonii (strain ATCC 35469 / DSM 13698 / CCUG 18766 / IAM 14443 / JCM 21226 / LMG 7866 / NBRC 102419 / NCTC 12128 / CDC 0568-73).